Consider the following 785-residue polypeptide: Endonuclease MutS2 (785 aa).

Residue 335–342 coordinates ATP; sequence GPNTGGKT. The 76-residue stretch at 710 to 785 folds into the Smr domain; it reads LDLRGERYED…GNGVTIVEFK (76 aa).

Belongs to the DNA mismatch repair MutS family. MutS2 subfamily. In terms of assembly, homodimer. Binds to stalled ribosomes, contacting rRNA.

Its function is as follows. Endonuclease that is involved in the suppression of homologous recombination and thus may have a key role in the control of bacterial genetic diversity. Acts as a ribosome collision sensor, splitting the ribosome into its 2 subunits. Detects stalled/collided 70S ribosomes which it binds and splits by an ATP-hydrolysis driven conformational change. Acts upstream of the ribosome quality control system (RQC), a ribosome-associated complex that mediates the extraction of incompletely synthesized nascent chains from stalled ribosomes and their subsequent degradation. Probably generates substrates for RQC. The protein is Endonuclease MutS2 of Listeria monocytogenes serotype 4b (strain F2365).